The sequence spans 376 residues: Lipoyl synthase, mitochondrial (376 aa).

[4Fe-4S] cluster contacts are provided by Cys-102, Cys-107, Cys-113, Cys-133, Cys-137, Cys-140, and Ser-348. The Radical SAM core domain maps to 116 to 337 (GGEDKTATAT…EEVGGEMGFA (222 aa)).

It belongs to the radical SAM superfamily. Lipoyl synthase family. It depends on [4Fe-4S] cluster as a cofactor.

It is found in the mitochondrion. The enzyme catalyses [[Fe-S] cluster scaffold protein carrying a second [4Fe-4S](2+) cluster] + N(6)-octanoyl-L-lysyl-[protein] + 2 oxidized [2Fe-2S]-[ferredoxin] + 2 S-adenosyl-L-methionine + 4 H(+) = [[Fe-S] cluster scaffold protein] + N(6)-[(R)-dihydrolipoyl]-L-lysyl-[protein] + 4 Fe(3+) + 2 hydrogen sulfide + 2 5'-deoxyadenosine + 2 L-methionine + 2 reduced [2Fe-2S]-[ferredoxin]. The protein operates within protein modification; protein lipoylation via endogenous pathway; protein N(6)-(lipoyl)lysine from octanoyl-[acyl-carrier-protein]: step 2/2. In terms of biological role, catalyzes the radical-mediated insertion of two sulfur atoms into the C-6 and C-8 positions of the octanoyl moiety bound to the lipoyl domains of lipoate-dependent enzymes, thereby converting the octanoylated domains into lipoylated derivatives. The protein is Lipoyl synthase, mitochondrial of Branchiostoma floridae (Florida lancelet).